We begin with the raw amino-acid sequence, 1175 residues long: DNA-directed RNA polymerase subunit beta (1175 aa).

Positions 1–24 (MEGSLLVASSASNNETANNVESTD) are disordered. Over residues 7–23 (VASSASNNETANNVEST) the composition is skewed to low complexity.

It belongs to the RNA polymerase beta chain family. In terms of assembly, the RNAP catalytic core consists of 2 alpha, 1 beta, 1 beta' and 1 omega subunit. When a sigma factor is associated with the core the holoenzyme is formed, which can initiate transcription.

It carries out the reaction RNA(n) + a ribonucleoside 5'-triphosphate = RNA(n+1) + diphosphate. DNA-dependent RNA polymerase catalyzes the transcription of DNA into RNA using the four ribonucleoside triphosphates as substrates. The chain is DNA-directed RNA polymerase subunit beta from Renibacterium salmoninarum (strain ATCC 33209 / DSM 20767 / JCM 11484 / NBRC 15589 / NCIMB 2235).